A 37-amino-acid polypeptide reads, in one-letter code: Large ribosomal subunit protein bL36 (37 aa).

The protein belongs to the bacterial ribosomal protein bL36 family.

The protein is Large ribosomal subunit protein bL36 of Cutibacterium acnes (strain DSM 16379 / KPA171202) (Propionibacterium acnes).